The following is a 912-amino-acid chain: Phosphoenolpyruvate carboxylase (912 aa).

Residues histidine 138 and lysine 575 contribute to the active site.

The protein belongs to the PEPCase type 1 family. The cofactor is Mg(2+).

It carries out the reaction oxaloacetate + phosphate = phosphoenolpyruvate + hydrogencarbonate. In terms of biological role, forms oxaloacetate, a four-carbon dicarboxylic acid source for the tricarboxylic acid cycle. This chain is Phosphoenolpyruvate carboxylase, found in Lactobacillus helveticus (strain DPC 4571).